Consider the following 351-residue polypeptide: uncharacterized protein (351 aa).

Positions 1–27 (MKNKKRVLIASSLSCAILLLSAATTQA) are cleaved as a signal peptide. A disordered region spans residues 27 to 71 (ANSAHKDSQDQNKKEHVDKSQQKDKRNVTNKDKNSTAPDDIGKNG). Residues 30 to 60 (AHKDSQDQNKKEHVDKSQQKDKRNVTNKDKN) show a composition bias toward basic and acidic residues.

Belongs to the aerolysin family.

This is an uncharacterized protein from Staphylococcus aureus (strain USA300).